We begin with the raw amino-acid sequence, 660 residues long: Peroxisomal acyl-coenzyme A oxidase 1 (660 aa).

At Ser-26 the chain carries Phosphoserine. N6-succinyllysine occurs at positions 89 and 90. The FAD site is built by Thr-139 and Gly-178. Lys-216 carries the post-translational modification N6-acetyllysine. Lys-241 carries the post-translational modification N6-succinyllysine. 3 positions are modified to N6-acetyllysine: Lys-255, Lys-267, and Lys-272. Lys-349 is modified (N6-succinyllysine). Residue Glu-421 is the Proton acceptor of the active site. Residues Lys-437 and Lys-446 each carry the N6-acetyllysine; alternate modification. Lys-437 and Lys-446 each carry N6-succinyllysine; alternate. The residue at position 500 (Lys-500) is an N6-acetyllysine. Residue Lys-512 is modified to N6-acetyllysine; alternate. Lys-512 carries the post-translational modification N6-succinyllysine; alternate. At Lys-542 the chain carries N6-succinyllysine. Lys-637 carries the post-translational modification N6-acetyllysine; alternate. The residue at position 637 (Lys-637) is an N6-succinyllysine; alternate. Residue Lys-643 is modified to N6-succinyllysine. A Phosphoserine modification is found at Ser-649. Lys-651 carries the post-translational modification N6-acetyllysine. The residue at position 654 (Lys-654) is an N6-succinyllysine. The Microbody targeting signal motif lies at 658 to 660; sequence SKL.

Belongs to the acyl-CoA oxidase family. As to quaternary structure, homodimer. Interacts with LONP2. It depends on FAD as a cofactor.

The protein resides in the peroxisome. The catalysed reaction is a 2,3-saturated acyl-CoA + O2 = a (2E)-enoyl-CoA + H2O2. It catalyses the reaction hexadecanoyl-CoA + O2 = (2E)-hexadecenoyl-CoA + H2O2. The enzyme catalyses dodecanoyl-CoA + O2 = (2E)-dodecenoyl-CoA + H2O2. It carries out the reaction octanoyl-CoA + O2 = (2E)-octenoyl-CoA + H2O2. The catalysed reaction is decanoyl-CoA + O2 = (2E)-decenoyl-CoA + H2O2. It catalyses the reaction tetradecanoyl-CoA + O2 = (2E)-tetradecenoyl-CoA + H2O2. The enzyme catalyses hexadecanedioyl-CoA + O2 = (2E)-hexadecenedioyl-CoA + H2O2. It carries out the reaction tetracosanoyl-CoA + O2 = (2E)-tetracosenoyl-CoA + H2O2. The catalysed reaction is glutaryl-CoA + O2 = (2E)-glutaconyl-CoA + H2O2. It catalyses the reaction hexanoyl-CoA + O2 = (2E)-hexenoyl-CoA + H2O2. The enzyme catalyses octadecanoyl-CoA + O2 = (2E)-octadecenoyl-CoA + H2O2. It carries out the reaction (5Z,8Z,11Z,14Z,17Z)-eicosapentaenoyl-CoA + O2 = (2E,5Z,8Z,11Z,14Z,17Z)-icosahexaenoyl-CoA + H2O2. The catalysed reaction is (6Z,9Z,12Z,15Z,18Z,21Z)-tetracosahexaenoyl-CoA + O2 = (2E,6Z,9Z,12Z,15Z,18Z,21Z)-tetracosaheptaenoyl-CoA + H2O2. It functions in the pathway lipid metabolism; peroxisomal fatty acid beta-oxidation. Functionally, involved in the initial and rate-limiting step of peroxisomal beta-oxidation of straight-chain saturated and unsaturated very-long-chain fatty acids. Catalyzes the desaturation of fatty acyl-CoAs such as palmitoyl-CoA (hexadecanoyl-CoA) to 2-trans-enoyl-CoAs ((2E)-enoyl-CoAs) such as (2E)-hexadecenoyl-CoA, and donates electrons directly to molecular oxygen (O(2)), thereby producing hydrogen peroxide (H(2)O(2)). In terms of biological role, shows highest activity against medium-chain fatty acyl-CoAs. Shows optimum activity with a chain length of 10 carbons (decanoyl-CoA) in vitro. Its function is as follows. Is active against a much broader range of substrates and shows activity towards long-chain acyl-CoAs. This Pongo abelii (Sumatran orangutan) protein is Peroxisomal acyl-coenzyme A oxidase 1.